We begin with the raw amino-acid sequence, 414 residues long: ORC1-type DNA replication protein 1 (414 aa).

ATP contacts are provided by residues 70–74, Tyr-213, and Arg-225; that span reads TGKTA.

It belongs to the CDC6/cdc18 family.

Functionally, involved in regulation of DNA replication. The protein is ORC1-type DNA replication protein 1 (cdc6-1) of Methanosarcina acetivorans (strain ATCC 35395 / DSM 2834 / JCM 12185 / C2A).